The sequence spans 664 residues: Putative membrane protein Bcell_0381 (664 aa).

The span at 588–616 shows a compositional bias: acidic residues; the sequence is DVTQDENGEEKSEEDNKEEIVEENTEEDN. The segment at 588 to 622 is disordered; that stretch reads DVTQDENGEEKSEEDNKEEIVEENTEEDNKEEKTI. The helical transmembrane segment at 636 to 656 threads the bilayer; it reads YQFLLAGIIMLVGGSCIYVFY.

It is found in the cell membrane. The polypeptide is Putative membrane protein Bcell_0381 (Evansella cellulosilytica (strain ATCC 21833 / DSM 2522 / FERM P-1141 / JCM 9156 / N-4) (Bacillus cellulosilyticus)).